A 762-amino-acid polypeptide reads, in one-letter code: ABC-type oligopeptide transporter ABCB9 (762 aa).

Transmembrane regions (helical) follow at residues 7–27, 47–67, 84–104, 116–136, 181–201, 221–241, 315–335, and 412–432; these read VVVT…IYAF, VLDL…ATIG, LVIT…LLLF, FWAL…LWGL, VAFL…ETFL, FTTA…AAGI, VFMF…FPII, and SGLT…HLVI. Residues 184–467 enclose the ABC transmembrane type-1 domain; sequence LVAASFFLIV…VGSVYSGLMQ (284 aa). Residues 500–736 form the ABC transporter domain; sequence VDFENVTFTY…GGLYAKLVQR (237 aa). Residue 535–542 coordinates ATP; the sequence is GPSGSGKS.

The protein belongs to the ABC transporter superfamily. ABCB family. MHC peptide exporter (TC 3.A.1.209) subfamily. As to quaternary structure, homodimer. Interacts (via TMD0 region) with LAMP1; this interaction strongly stabilizes ABCB9 and protects ABCB9 against lysosomal degradation. Interacts (via TMD0 region) with LAMP2 (isoform LAMP-2B). Interacts (via TMD0) with YIF1B; this interaction allows (but is not essential) the ER-to-Golgi trafficking and strongly depends on a salt bridge within TMD0. In terms of tissue distribution, found in testis, particularly in the Sertoli cells of the seminiferous tubules. Also expressed in kidney, brain, heart, lung, spleen, thymus, intestine and testis. Higher expression detected in brain and testis than in thymus and intestine.

The protein resides in the lysosome membrane. The enzyme catalyses a [oligopeptide](in) + ATP + H2O = a [oligopeptide](out) + ADP + phosphate + H(+). In terms of biological role, ATP-dependent low-affinity peptide transporter which translocates a broad spectrum of peptides from the cytosol to the lysosomal lumen for degradation. Displays a broad peptide length specificity from 6-mer up to at least 59-mer peptides with an optimum of 23-mers. Binds and transports smaller and larger peptides with the same affinity. Favors positively charged, aromatic or hydrophobic residues in the N- and C-terminal positions whereas negatively charged residues as well as asparagine and methionine are not favored. In Rattus norvegicus (Rat), this protein is ABC-type oligopeptide transporter ABCB9.